We begin with the raw amino-acid sequence, 547 residues long: Sodium-coupled neutral amino acid transporter 4 (547 aa).

Positions 1 to 26 (MDPMELRNVNIEPDDESSSGESVPDS) are disordered. Topologically, residues 1 to 104 (MDPMELRNVN…GLSYAMANTG (104 aa)) are extracellular. The residue at position 49 (serine 49) is a Phosphoserine. Residues 105–125 (IILFIIMLLAVAILSLYSVHL) form a helical membrane-spanning segment. Topologically, residues 126 to 151 (LLKTAKEGGSLIYEKLGEKAFGWPGK) are cytoplasmic. A helical transmembrane segment spans residues 152-172 (IGAFISITMQNIGAMSSYLFI). The Extracellular portion of the chain corresponds to 173–195 (IKYELPEVIRAFMGLEENTGEWY). The chain crosses the membrane as a helical span at residues 196 to 216 (PNGNYLIVFVSLGIILPLSLL). The Cytoplasmic segment spans residues 217–220 (KNLG). The chain crosses the membrane as a helical span at residues 221–241 (YLGYTSGFSLTCMVFFVSVVI). The Extracellular portion of the chain corresponds to 242–332 (YKKFQIPCPL…PKYFVFNSRT (91 aa)). A disulfide bond links cysteine 249 and cysteine 321. N-linked (GlcNAc...) asparagine glycosylation is found at asparagine 260, asparagine 264, and asparagine 276. A helical transmembrane segment spans residues 333-353 (AYAIPILAFAFVCHPEVLPIY). The Cytoplasmic segment spans residues 354–369 (SELKDRSRRKMQTVSN). A helical transmembrane segment spans residues 370 to 390 (ISITGMLVMYLLAALFGYLTF). Over 391–411 (YGEVEDELLHAYSKVYTFDIP) the chain is Extracellular. Residues 412–432 (LLMVRLAVLVAVTLTVPIVLF) traverse the membrane as a helical segment. The Cytoplasmic segment spans residues 433–453 (PIRTSVTTLLFPKRPFSWIRH). The helical transmembrane segment at 454–474 (FLIAAVLIALNNVLVILVPTI) threads the bilayer. The Extracellular portion of the chain corresponds to 475–476 (KY). A helical transmembrane segment spans residues 477-497 (IFGFIGASSATMLIFILPAVF). Residues 498–514 (YLKLVKKESFRSPQKVG) are Cytoplasmic-facing. Residues 515-535 (ALIFLVVGIIFMIGSMALIII) form a helical membrane-spanning segment. The Extracellular segment spans residues 536–547 (DWIYDPPNSKHH).

It belongs to the amino acid/polyamine transporter 2 family. Post-translationally, the disulfide bond plays an important role in substrate transport, but has no effect on trafficking to the cell surface.

It is found in the cell membrane. It localises to the cell projection. Its subcellular location is the microvillus membrane. The catalysed reaction is L-methionine(in) + Na(+)(in) = L-methionine(out) + Na(+)(out). It carries out the reaction L-asparagine(in) + Na(+)(in) = L-asparagine(out) + Na(+)(out). It catalyses the reaction L-threonine(in) + Na(+)(in) = L-threonine(out) + Na(+)(out). The enzyme catalyses L-serine(in) + Na(+)(in) = L-serine(out) + Na(+)(out). The catalysed reaction is glycine(in) + Na(+)(in) = glycine(out) + Na(+)(out). It carries out the reaction L-alanine(in) + Na(+)(in) = L-alanine(out) + Na(+)(out). It catalyses the reaction L-glutamine(in) + Na(+)(in) = L-glutamine(out) + Na(+)(out). The enzyme catalyses L-histidine(in) + Na(+)(in) = L-histidine(out) + Na(+)(out). The catalysed reaction is L-cysteine(in) + Na(+)(in) = L-cysteine(out) + Na(+)(out). It carries out the reaction L-proline(in) + Na(+)(in) = L-proline(out) + Na(+)(out). Symporter that cotransports neutral amino acids and sodium ions from the extraccellular to the intracellular side of the cell membrane. The transport is electrogenic, pH dependent and partially tolerates substitution of Na(+) by Li(+). Preferentially transports smaller amino acids, such as glycine, L-alanine, L-serine, L-asparagine and L-threonine, followed by L-cysteine, L-histidine, L-proline and L-glutamine and L-methionine. This Pongo abelii (Sumatran orangutan) protein is Sodium-coupled neutral amino acid transporter 4.